The sequence spans 197 residues: Putative sulfur carrier protein aq_1421 (197 aa).

Cys17 (cysteine persulfide intermediate) is an active-site residue.

It belongs to the sulfur carrier protein TusA family.

This chain is Putative sulfur carrier protein aq_1421, found in Aquifex aeolicus (strain VF5).